The following is a 250-amino-acid chain: MEMKQISDSTIKITIQLEDLEKRGMEMADFLVPQEKTEEFFYTILDELEMPDNFLDSGMLSFRVTPKPDKVDVFVTKSKLDKNLSFEDLADLPDMDELSHMSPDEFLKTLEKSIFEKSKEDIEAVKSLETAEAEEREQLSQEAADEQSAENAERYIYYILRFEDIKAAAAFAQTVDYKIDLSELYKYDSAYYLTILVDVEGFPERYPAWLLAKMREFADDSDITRAVLQEHGHLLLVTDAVSGLQKVECL.

Belongs to the MecA family. Homodimer.

In terms of biological role, enables the recognition and targeting of unfolded and aggregated proteins to the ClpC protease or to other proteins involved in proteolysis. This chain is Adapter protein MecA, found in Streptococcus sanguinis (strain SK36).